A 127-amino-acid polypeptide reads, in one-letter code: Small ribosomal subunit protein uS8m (127 aa).

Belongs to the universal ribosomal protein uS8 family.

It localises to the mitochondrion. The polypeptide is Small ribosomal subunit protein uS8m (RPS8) (Acanthamoeba castellanii (Amoeba)).